Reading from the N-terminus, the 259-residue chain is 3-deoxy-manno-octulosonate cytidylyltransferase (259 aa).

It belongs to the KdsB family.

Its subcellular location is the cytoplasm. It catalyses the reaction 3-deoxy-alpha-D-manno-oct-2-ulosonate + CTP = CMP-3-deoxy-beta-D-manno-octulosonate + diphosphate. It functions in the pathway nucleotide-sugar biosynthesis; CMP-3-deoxy-D-manno-octulosonate biosynthesis; CMP-3-deoxy-D-manno-octulosonate from 3-deoxy-D-manno-octulosonate and CTP: step 1/1. The protein operates within bacterial outer membrane biogenesis; lipopolysaccharide biosynthesis. Functionally, activates KDO (a required 8-carbon sugar) for incorporation into bacterial lipopolysaccharide in Gram-negative bacteria. This chain is 3-deoxy-manno-octulosonate cytidylyltransferase, found in Nitrosococcus oceani (strain ATCC 19707 / BCRC 17464 / JCM 30415 / NCIMB 11848 / C-107).